Reading from the N-terminus, the 372-residue chain is Cyclin-A3-2 (372 aa).

Residues 53 to 73 (NQKKETQKPKRNLKPPPAKQI) are disordered.

Belongs to the cyclin family. Cyclin AB subfamily.

This is Cyclin-A3-2 (CYCA3-2) from Arabidopsis thaliana (Mouse-ear cress).